The following is a 237-amino-acid chain: Ribosomal RNA small subunit methyltransferase G (237 aa).

S-adenosyl-L-methionine contacts are provided by residues glycine 78, phenylalanine 83, 129 to 130, and arginine 148; that span reads AE.

The protein belongs to the methyltransferase superfamily. RNA methyltransferase RsmG family.

It localises to the cytoplasm. Functionally, specifically methylates the N7 position of a guanine in 16S rRNA. The sequence is that of Ribosomal RNA small subunit methyltransferase G from Streptococcus pyogenes serotype M4 (strain MGAS10750).